The sequence spans 345 residues: Putative [LysW]-L-2-aminoadipate/[LysW]-L-glutamate phosphate reductase (345 aa).

NADP(+) is bound at residue 11-14 (SGFT). The disordered stretch occupies residues 34–56 (TSRSKENKTIGHSHPNLRHSDLR). The active site involves C146. N309 lines the NADP(+) pocket.

Belongs to the NAGSA dehydrogenase family. Type 1 subfamily. LysY sub-subfamily.

The protein resides in the cytoplasm. The catalysed reaction is [amino-group carrier protein]-C-terminal-N-(1-carboxy-5-oxopentan-1-yl)-L-glutamine + phosphate + NADP(+) = [amino-group carrier protein]-C-terminal-N-(1-carboxy-5-phosphooxy-5-oxopentan-1-yl)-L-glutamine + NADPH + H(+). It catalyses the reaction [amino-group carrier protein]-C-terminal-gamma-(L-glutamyl-5-semialdehyde)-L-glutamate + phosphate + NADP(+) = [amino-group carrier protein]-C-terminal-gamma-(5-phospho-L-glutamyl)-L-glutamate + NADPH + H(+). It functions in the pathway amino-acid biosynthesis; L-lysine biosynthesis via AAA pathway; L-lysine from L-alpha-aminoadipate (Thermus route): step 3/5. Its pathway is amino-acid biosynthesis; L-arginine biosynthesis. In terms of biological role, involved in both the arginine and lysine biosynthetic pathways. This Haloarcula marismortui (strain ATCC 43049 / DSM 3752 / JCM 8966 / VKM B-1809) (Halobacterium marismortui) protein is Putative [LysW]-L-2-aminoadipate/[LysW]-L-glutamate phosphate reductase.